Reading from the N-terminus, the 423-residue chain is Testican-2 (423 aa).

The signal sequence occupies residues M1 to A22. S72 carries the post-translational modification Phosphoserine. 5 disulfide bridges follow: C90-C101, C95-C111, C136-C166, C139-C159, and C148-C180. The region spanning G130–C182 is the Kazal-like domain. N225 carries N-linked (GlcNAc...) asparagine glycosylation. In terms of domain architecture, Thyroglobulin type-1 spans K309–C375. 3 disulfides stabilise this stretch: C312–C336, C347–C354, and C356–C375. Residues S382 and S387 are each glycosylated (O-linked (Xyl...) (glycosaminoglycan) serine). The disordered stretch occupies residues S387–W423. A compositionally biased stretch (acidic residues) spans W391–W423.

Post-translationally, O-glycosylated; contains chondroitin sulfate and heparan sulfate. Brain specific.

It is found in the secreted. It localises to the extracellular space. The protein resides in the extracellular matrix. In terms of biological role, may participate in diverse steps of neurogenesis. Binds calcium. The protein is Testican-2 (Spock2) of Mus musculus (Mouse).